The chain runs to 104 residues: MKRKASIMFVHQDKYEEYKQRHDDIWPEMAEALKAHGAHHYSIFLDEETGRLFAYLEIEDEEKWRKMADTEVCQRWWKSMAPLMKTNSDFSPVAIDLKEVFYLD.

Residue Y18 participates in substrate binding. Catalysis depends on H22, which acts as the Proton donor. Substrate-binding positions include Y41 and 76–77 (WW).

This sequence belongs to the rhamnose mutarotase family. Homodimer.

Its subcellular location is the cytoplasm. The enzyme catalyses alpha-L-rhamnose = beta-L-rhamnose. It functions in the pathway carbohydrate metabolism; L-rhamnose metabolism. Involved in the anomeric conversion of L-rhamnose. The protein is L-rhamnose mutarotase of Bacillus subtilis (strain 168).